Here is a 568-residue protein sequence, read N- to C-terminus: MNTLIAQIEKGKPFFEKISRNIYLRAIRDGFISAMPVILFSSIFLLIAYVPNIFGFTWPKGIENMLMTPYNYTMGIIGFLVAGTTAKSLTDSMNRQLEKTNQINFISTMLASMAGFLIMAADPAKEGGFLSAFMGTKGLLTAFIAAFITVNVYKICVKNNVTIRMPEEVPPNISQVFKDIFPFAFSIIILYAIQLAIKAVIGVNVAQSIGTLLAPLFSAADGYLGITIIFGAYALFWFVGIHGPSIVEPAIAAITYSNVELNAHLIHAGQHADKVITSGTQMFIVTMGGTGATLVVPFMFMWLCKSKRNKAIGRASVVPTFFGVNEPILFGAPIVLNPVFFIPFILAPIVNVWIFKFFVDTLGMNSFFANLPWTTPGPIGIVLGTGFAVLSFVLAALLILVDTVIYYPFVKVYDEQILAEEAEGKSSSDALKEKVAANFDTKKADAILEGAESKEEPATHAITEETNVLVLCAGGGTSGLLANALNKAAEEYGAPVKAAAGSYGAHREILDQYQLVILAPQVASNYEDMKAETDKLGIKLAKTEGAQYIGLTRDGKGALAFVEEQFKD.

Residues 8–409 (IEKGKPFFEK…LVDTVIYYPF (402 aa)) enclose the PTS EIIC type-3 domain. The next 10 membrane-spanning stretches (helical) occupy residues 30–50 (GFISAMPVILFSSIFLLIAYV), 65–85 (MLMTPYNYTMGIIGFLVAGTT), 103–123 (INFISTMLASMAGFLIMAADP), 128–148 (GFLSAFMGTKGLLTAFIAAFI), 183–203 (FAFSIIILYAIQLAIKAVIGV), 222–242 (GYLGITIIFGAYALFWFVGIH), 246–266 (IVEPAIAAITYSNVELNAHLI), 283–303 (FIVTMGGTGATLVVPFMFMWL), 339–359 (VFFIPFILAPIVNVWIFKFFV), and 381–401 (IVLGTGFAVLSFVLAALLILV). The 104-residue stretch at 465-568 (ETNVLVLCAG…LAFVEEQFKD (104 aa)) folds into the PTS EIIB type-3 domain. The Phosphocysteine intermediate; for EIIB activity role is filled by cysteine 472. Cysteine 472 is modified (phosphocysteine; by EIIA).

It localises to the cell membrane. The catalysed reaction is lactose(out) + N(pros)-phospho-L-histidyl-[protein] = lactose 6-phosphate(in) + L-histidyl-[protein]. The phosphoenolpyruvate-dependent sugar phosphotransferase system (sugar PTS), a major carbohydrate active transport system, catalyzes the phosphorylation of incoming sugar substrates concomitantly with their translocation across the cell membrane. The enzyme II LacEF PTS system is involved in lactose transport. The protein is PTS system lactose-specific EIICB component of Streptococcus mutans serotype c (strain ATCC 700610 / UA159).